A 376-amino-acid polypeptide reads, in one-letter code: MKDVPGFLQQSQNSGPGQPAVWHRLEELYTKKLWHQLTLQVLDFVQDPCFAQGDGLIKLYENFISEFEHRVNPLSLVEIILHVVRQMTDPNVALTFLEKTREKVKSSDEAVILCKTAIGALKLNIGDLQVTKETIEDVEEMLNNLPGVTSVHSRFYDLSSKYYQTIGNHASYYKDALRFLGCVDIKDLPVSEQQERAFTLGLAGLLGEGVFNFGELLMHPVLESLRNTDRQWLIDTLYAFNSGNVERFQTLKTAWGQQPDLAANEAQLLRKIQLLCLMEMTFTRPANHRQLTFEEIAKSAKITVNEVELLVMKALSVGLVKGSIDEVDKRVHMTWVQPRVLDLQQIKGMKDRLEFWCTDVKSMEMLVEHQAHDILT.

A PCI domain is found at 171–338 (SYYKDALRFL…KRVHMTWVQP (168 aa)). At Lys-298 the chain carries N6-acetyllysine.

The protein belongs to the proteasome subunit S11 family. In terms of assembly, component of the 19S proteasome regulatory particle complex. The 26S proteasome consists of a 20S core particle (CP) and two 19S regulatory subunits (RP). The regulatory particle is made of a lid composed of 9 subunits including PSMD13, a base containing 6 ATPases and few additional components.

Functionally, component of the 26S proteasome, a multiprotein complex involved in the ATP-dependent degradation of ubiquitinated proteins. This complex plays a key role in the maintenance of protein homeostasis by removing misfolded or damaged proteins, which could impair cellular functions, and by removing proteins whose functions are no longer required. Therefore, the proteasome participates in numerous cellular processes, including cell cycle progression, apoptosis, or DNA damage repair. This Homo sapiens (Human) protein is 26S proteasome non-ATPase regulatory subunit 13 (PSMD13).